We begin with the raw amino-acid sequence, 63 residues long: Eumenitin VP1 (63 aa).

A signal peptide spans 1-22 (MRGTSFILFAVVVILGFLHANA). AXPX repeat units lie at residues 22 to 25 (AEPL), 26 to 29 (ANPA), 32 to 35 (ANPD), 40 to 43 (ADPL), and 44 to 47 (ADPE). Residues 23-48 (EPLANPAPLANPDPLANADPLADPEA) constitute a propeptide that is removed on maturation.

Expressed by the venom gland.

Its subcellular location is the secreted. It localises to the target cell membrane. Functionally, antimicrobial peptide with activities against the fungi B.cinerea (MIC=5 uM) and C.albicans (MIC=100 uM), the Gram-negative bacterium E.coli (MIC=25 uM) and the Gram-positive bacterium S.aureus (MIC=100 uM). Shows cytolytic activity against insect cell lines. Has no hemolytic activity against human erythrocytes. In vivo, peptide injection in the vicinity of the head and thorax of lepidopteran larvae induces feeding disorder followed by death due to starvation. The polypeptide is Eumenitin VP1 (Eumenes pomiformis (Potter wasp)).